A 336-amino-acid polypeptide reads, in one-letter code: Cell division protein ZipA (336 aa).

Residues 1–2 (ME) lie on the Periplasmic side of the membrane. The helical transmembrane segment at 3–23 (LHILFFILAGLLIAVLISFSL) threads the bilayer. Over 24-336 (WSARREKSRI…SRQSYLARVS (313 aa)) the chain is Cytoplasmic. Residues 56 to 77 (PSLNPQSYAQTTGQHGETEADN) are disordered. Over residues 59 to 70 (NPQSYAQTTGQH) the composition is skewed to polar residues.

Belongs to the ZipA family. Interacts with FtsZ via their C-terminal domains.

It localises to the cell inner membrane. Essential cell division protein that stabilizes the FtsZ protofilaments by cross-linking them and that serves as a cytoplasmic membrane anchor for the Z ring. Also required for the recruitment to the septal ring of downstream cell division proteins. The polypeptide is Cell division protein ZipA (Actinobacillus pleuropneumoniae serotype 3 (strain JL03)).